The following is a 448-amino-acid chain: Biotin carboxylase (448 aa).

Residues 1-445 (MLEKVVIANR…NIHYLEKKLG (445 aa)) form the Biotin carboxylation domain. ATP contacts are provided by residues Lys116, Lys159, 165–166 (GG), 201–204 (EKYL), His209, and His236. An ATP-grasp domain is found at 120-317 (IKAMKKAGVP…LVKEQLRIAA (198 aa)). Lys238 is a binding site for hydrogencarbonate. 2 residues coordinate ATP: Glu276 and Glu288. Positions 276, 288, and 290 each coordinate Mg(2+). Positions 276, 288, and 290 each coordinate Mn(2+). Hydrogencarbonate is bound by residues Arg292, Val295, and Arg338. The active site involves Arg292. Residue Arg338 participates in biotin binding.

In terms of assembly, acetyl-CoA carboxylase is a heterohexamer of biotin carboxyl carrier protein, biotin carboxylase and the two subunits of carboxyl transferase in a 2:2 complex. It depends on Mg(2+) as a cofactor. Mn(2+) serves as cofactor.

It catalyses the reaction N(6)-biotinyl-L-lysyl-[protein] + hydrogencarbonate + ATP = N(6)-carboxybiotinyl-L-lysyl-[protein] + ADP + phosphate + H(+). Its pathway is lipid metabolism; malonyl-CoA biosynthesis; malonyl-CoA from acetyl-CoA: step 1/1. Functionally, this protein is a component of the acetyl coenzyme A carboxylase complex; first, biotin carboxylase catalyzes the carboxylation of the carrier protein and then the transcarboxylase transfers the carboxyl group to form malonyl-CoA. The chain is Biotin carboxylase (accC) from Haemophilus influenzae (strain ATCC 51907 / DSM 11121 / KW20 / Rd).